The following is a 1057-amino-acid chain: Atrial natriuretic peptide receptor 1 (1057 aa).

Positions methionine 1–alanine 28 are cleaved as a signal peptide. At serine 29–glutamate 469 the chain is on the extracellular side. The N-linked (GlcNAc...) asparagine glycan is linked to asparagine 41. Residues serine 81, glycine 113, and cysteine 114 each coordinate chloride. 2 cysteine pairs are disulfide-bonded: cysteine 88/cysteine 114 and cysteine 192/cysteine 241. N-linked (GlcNAc...) asparagine glycosylation is found at asparagine 208, asparagine 334, asparagine 375, asparagine 382, and asparagine 423. A disulfide bridge links cysteine 451 with cysteine 460. The chain crosses the membrane as a helical span at residues valine 470–tyrosine 490. Residues arginine 491–glycine 1057 are Cytoplasmic-facing. A phosphoserine mark is found at serine 515 and serine 525. In terms of domain architecture, Protein kinase spans glycine 524 to asparagine 801. A Phosphothreonine modification is found at threonine 528. Serine 530, serine 534, and serine 538 each carry phosphoserine. Threonine 541 carries the post-translational modification Phosphothreonine. The region spanning threonine 872 to glutamate 1002 is the Guanylate cyclase domain.

Belongs to the adenylyl cyclase class-4/guanylyl cyclase family. Homodimer. Phosphorylation of the protein kinase-like domain is required for full activation by ANP.

It is found in the membrane. The catalysed reaction is GTP = 3',5'-cyclic GMP + diphosphate. Receptor for the atrial natriuretic peptide NPPA/ANP and the brain natriuretic peptide NPPB/BNP which are potent vasoactive hormones playing a key role in cardiovascular homeostasis. Plays an essential role in the regulation of endothelial cell senescence and vascular aging. Upon activation by ANP or BNP, stimulates the production of cyclic guanosine monophosphate (cGMP) that promotes vascular tone and volume homeostasis by activation of protein kinase cGMP-dependent 1/PRKG1 and subsequently PRKAA1, thereby controlling blood pressure and maintaining cardiovascular homeostasis. This chain is Atrial natriuretic peptide receptor 1 (Npr1), found in Mus musculus (Mouse).